Here is a 333-residue protein sequence, read N- to C-terminus: Phenylalanine--tRNA ligase alpha subunit (333 aa).

Residue E248 coordinates Mg(2+).

Belongs to the class-II aminoacyl-tRNA synthetase family. Phe-tRNA synthetase alpha subunit type 1 subfamily. In terms of assembly, tetramer of two alpha and two beta subunits. Mg(2+) is required as a cofactor.

It is found in the cytoplasm. The catalysed reaction is tRNA(Phe) + L-phenylalanine + ATP = L-phenylalanyl-tRNA(Phe) + AMP + diphosphate + H(+). This is Phenylalanine--tRNA ligase alpha subunit from Ureaplasma parvum serovar 3 (strain ATCC 27815 / 27 / NCTC 11736).